We begin with the raw amino-acid sequence, 144 residues long: UPF0292 protein MA_4098 (144 aa).

The 82-residue stretch at 28-109 (GAVIIVEGKR…KPELQIRNKL (82 aa)) folds into the Toprim domain. E34, D78, and D80 together coordinate Mg(2+).

Belongs to the UPF0292 family. Mg(2+) serves as cofactor.

This chain is UPF0292 protein MA_4098, found in Methanosarcina acetivorans (strain ATCC 35395 / DSM 2834 / JCM 12185 / C2A).